The following is a 418-amino-acid chain: MNLKLQLKILSFLQFCLWGSWLTTLGSYMFVTLKFDGASIGAVYSSLGIAAVFMPALLGIVADKWLSAKWVYAICHTIGAITLFMAAQVTTPEAMFLVILINSFAYMPTLGLINTISYYRLQNAGMDIVTDFPPIRIWGTIGFIMAMWVVSLSGFELSHMQLYIGAALSAILVLFTLTLPHIPVAKQQANQSWTTLLGLDAFALFKNKRMAIFFIFSMLLGAELQITNMFGNTFLHSFDKDPMFASSFIVQHASIIMSISQISETLFILTIPFFLSRYGIKNVMMISIVAWILRFALFAYGDPTPFGTVLLVLSMIVYGCAFDFFNISGSVFVEKEVSPAIRASAQGMFLMMTNGFGCILGGIVSGKVVEMYTQNGITDWQTVWLIFAGYSVVLAFAFMAMFKYKHVRVPTGTQTVSH.

Over 1 to 4 (MNLK) the chain is Cytoplasmic. The helical transmembrane segment at 5–29 (LQLKILSFLQFCLWGSWLTTLGSYM) threads the bilayer. The Periplasmic segment spans residues 30–36 (FVTLKFD). A helical transmembrane segment spans residues 37-58 (GASIGAVYSSLGIAAVFMPALL). The Cytoplasmic portion of the chain corresponds to 59-67 (GIVADKWLS). A helical membrane pass occupies residues 68-88 (AKWVYAICHTIGAITLFMAAQ). At 89-91 (VTT) the chain is on the periplasmic side. Residues 92-113 (PEAMFLVILINSFAYMPTLGLI) traverse the membrane as a helical segment. At 114–135 (NTISYYRLQNAGMDIVTDFPPI) the chain is on the cytoplasmic side. A helical transmembrane segment spans residues 136–156 (RIWGTIGFIMAMWVVSLSGFE). Residues 157–158 (LS) are Periplasmic-facing. The chain crosses the membrane as a helical span at residues 159–178 (HMQLYIGAALSAILVLFTLT). Residues 179–209 (LPHIPVAKQQANQSWTTLLGLDAFALFKNKR) are Cytoplasmic-facing. A helical membrane pass occupies residues 210 to 236 (MAIFFIFSMLLGAELQITNMFGNTFLH). The Periplasmic segment spans residues 237–247 (SFDKDPMFASS). A helical membrane pass occupies residues 248-268 (FIVQHASIIMSISQISETLFI). At 269–280 (LTIPFFLSRYGI) the chain is on the cytoplasmic side. Residues 281–300 (KNVMMISIVAWILRFALFAY) form a helical membrane-spanning segment. Residues 301–305 (GDPTP) are Periplasmic-facing. Residues 306–326 (FGTVLLVLSMIVYGCAFDFFN) traverse the membrane as a helical segment. Topologically, residues 327-346 (ISGSVFVEKEVSPAIRASAQ) are cytoplasmic. A helical transmembrane segment spans residues 347 to 369 (GMFLMMTNGFGCILGGIVSGKVV). At 370–379 (EMYTQNGITD) the chain is on the periplasmic side. Residues 380 to 403 (WQTVWLIFAGYSVVLAFAFMAMFK) traverse the membrane as a helical segment. The Cytoplasmic portion of the chain corresponds to 404–418 (YKHVRVPTGTQTVSH).

It belongs to the major facilitator superfamily. Nucleoside:H(+) symporter (NHS) (TC 2.A.1.10) family.

It is found in the cell inner membrane. The enzyme catalyses adenosine(in) + H(+)(in) = adenosine(out) + H(+)(out). The catalysed reaction is uridine(in) + H(+)(in) = uridine(out) + H(+)(out). It carries out the reaction thymidine(in) + H(+)(in) = thymidine(out) + H(+)(out). It catalyses the reaction cytidine(in) + H(+)(in) = cytidine(out) + H(+)(out). The enzyme catalyses 2'-deoxycytidine(in) + H(+)(in) = 2'-deoxycytidine(out) + H(+)(out). The catalysed reaction is guanosine(in) + H(+)(in) = guanosine(out) + H(+)(out). It carries out the reaction inosine(in) + H(+)(in) = inosine(out) + H(+)(out). With respect to regulation, inhibited by the protonophore uncouplers 2,4-dinitrophenol and carbonyl cyanide m-chlorophenylhydrazone (CCCP), and by valinomycin. Inhibited by the nucleoside antibiotic showdomycin. In terms of biological role, broad-specificity transporter of purine and pyrimidine nucleosides. Can transport adenosine, uridine, thymidine, cytidine, deoxycytidine, guanosine and inosine. Can also transport xanthosine, but with a very low affinity. Transport is driven by a proton motive force. The chain is Nucleoside permease NupG from Escherichia coli (strain K12).